We begin with the raw amino-acid sequence, 175 residues long: Protein LHCP TRANSLOCATION DEFECT (175 aa).

The N-terminal 68 residues, 1-68, are a transit peptide targeting the chloroplast; sequence MASSSISFSC…WFKFGKNGVD (68 aa). The ANK repeat unit spans residues 117 to 149; sequence PVDILLMLAATEGDRPKIEELLKAGADYSVKDA.

In terms of assembly, interacts with CAO/cpSRP43, but is not a component of the transit complex. Interacts with LHCP (via T14 domain), TIC40 and TIC110. In terms of tissue distribution, highly expressed in leaves and seedlings. Detected in roots, but not in germinating seeds.

It localises to the plastid. Its subcellular location is the chloroplast thylakoid membrane. The protein localises to the chloroplast envelope. The protein resides in the chloroplast stroma. Its function is as follows. Involved in the import of light-harvesting complex proteins (LHCP) and subsequent routing of these proteins to the chloroplast signal recognition particle (SRP) pathway. The protein is Protein LHCP TRANSLOCATION DEFECT (LTD) of Arabidopsis thaliana (Mouse-ear cress).